The chain runs to 315 residues: MSHSKVAVIGSGNIGTDLVVKLKKLATNVEIAVLVGIDPSSDGLARARRMGIGTVDTGVQGLIEHAEFDEIDIIFDSTSAKAHLVNEEALRTFGKRLIDLTPAAVGPYVVPAVNLDDHLGAPNVNMVTCGGQATIPIVAAISSVTAVHYAEIVASIASKSAGPGTRSNIDEFTQTTSAAIEKVGGAAHGKAIIVLNPAEPPLIMRDTVLALVTDPDQNRIRQSVIDMVEKVSAYVPGYRLKQEVQFTQLDDAESVATLTGGVDKGPGLWKVAVFLEVEGAAHYLPAYAGNLDIMTSAALQVAERIAANTVQEATR.

Residue 11 to 14 (SGNI) coordinates NAD(+). Cys129 (acyl-thioester intermediate) is an active-site residue. NAD(+) is bound by residues 160 to 168 (SAGPGTRSN) and Asn290.

The protein belongs to the acetaldehyde dehydrogenase family.

The enzyme catalyses acetaldehyde + NAD(+) + CoA = acetyl-CoA + NADH + H(+). The sequence is that of Acetaldehyde dehydrogenase 2 from Mycobacterium sp. (strain KMS).